The chain runs to 676 residues: Heat shock cognate HSP70 protein (676 aa).

Positions 613–676 are disordered; that stretch reads SARREGKDGW…RIEAINANTE (64 aa). Acidic residues predominate over residues 630–646; that stretch reads GSGDDNDGDDNSDEEDE.

The protein belongs to the heat shock protein 70 family.

This chain is Heat shock cognate HSP70 protein, found in Trypanosoma brucei brucei.